Reading from the N-terminus, the 289-residue chain is ATP synthase gamma chain (289 aa).

Belongs to the ATPase gamma chain family. F-type ATPases have 2 components, CF(1) - the catalytic core - and CF(0) - the membrane proton channel. CF(1) has five subunits: alpha(3), beta(3), gamma(1), delta(1), epsilon(1). CF(0) has three main subunits: a, b and c.

The protein resides in the cell inner membrane. Produces ATP from ADP in the presence of a proton gradient across the membrane. The gamma chain is believed to be important in regulating ATPase activity and the flow of protons through the CF(0) complex. The sequence is that of ATP synthase gamma chain from Erwinia tasmaniensis (strain DSM 17950 / CFBP 7177 / CIP 109463 / NCPPB 4357 / Et1/99).